Consider the following 359-residue polypeptide: Peptide chain release factor 1 (359 aa).

The residue at position 233 (glutamine 233) is an N5-methylglutamine.

This sequence belongs to the prokaryotic/mitochondrial release factor family. Methylated by PrmC. Methylation increases the termination efficiency of RF1.

Its subcellular location is the cytoplasm. Functionally, peptide chain release factor 1 directs the termination of translation in response to the peptide chain termination codons UAG and UAA. This Clostridium acetobutylicum (strain ATCC 824 / DSM 792 / JCM 1419 / IAM 19013 / LMG 5710 / NBRC 13948 / NRRL B-527 / VKM B-1787 / 2291 / W) protein is Peptide chain release factor 1.